Reading from the N-terminus, the 123-residue chain is Secreted LysM effector Lys1 (123 aa).

The N-terminal stretch at 1–20 (MMGLAKTLLLASQLTAVVVA) is a signal peptide. The region spanning 72–118 (KFCWVQAGNKCYQVAMENHISLADFLKWNPGAGSDCRTLWANTYACV) is the LysM domain.

The protein belongs to the secreted LysM effector family.

Functionally, might have a role in sequestration of chitin oligosaccharides (breakdown products of fungal cell walls that are released during invasion and act as triggers of host immunity) to dampen host defense. This Pochonia chlamydosporia (strain 123) (Metacordyceps chlamydosporia) protein is Secreted LysM effector Lys1.